The primary structure comprises 248 residues: tRNA uridine(34) hydroxylase (248 aa).

The region spanning 128–222 (EGRPVVMLDT…YFEEVGGAHY (95 aa)) is the Rhodanese domain. C182 (cysteine persulfide intermediate) is an active-site residue.

This sequence belongs to the TrhO family.

It carries out the reaction uridine(34) in tRNA + AH2 + O2 = 5-hydroxyuridine(34) in tRNA + A + H2O. In terms of biological role, catalyzes oxygen-dependent 5-hydroxyuridine (ho5U) modification at position 34 in tRNAs. In Thiobacillus denitrificans (strain ATCC 25259 / T1), this protein is tRNA uridine(34) hydroxylase.